A 397-amino-acid polypeptide reads, in one-letter code: Tryptophan synthase beta chain (397 aa).

Lys-91 carries the post-translational modification N6-(pyridoxal phosphate)lysine.

This sequence belongs to the TrpB family. In terms of assembly, tetramer of two alpha and two beta chains. Requires pyridoxal 5'-phosphate as cofactor.

It catalyses the reaction (1S,2R)-1-C-(indol-3-yl)glycerol 3-phosphate + L-serine = D-glyceraldehyde 3-phosphate + L-tryptophan + H2O. It functions in the pathway amino-acid biosynthesis; L-tryptophan biosynthesis; L-tryptophan from chorismate: step 5/5. Its function is as follows. The beta subunit is responsible for the synthesis of L-tryptophan from indole and L-serine. The sequence is that of Tryptophan synthase beta chain from Bacillus thuringiensis (strain Al Hakam).